The sequence spans 178 residues: Large ribosomal subunit protein uL10 (178 aa).

Belongs to the universal ribosomal protein uL10 family. As to quaternary structure, part of the ribosomal stalk of the 50S ribosomal subunit. The N-terminus interacts with L11 and the large rRNA to form the base of the stalk. The C-terminus forms an elongated spine to which L12 dimers bind in a sequential fashion forming a multimeric L10(L12)X complex.

Its function is as follows. Forms part of the ribosomal stalk, playing a central role in the interaction of the ribosome with GTP-bound translation factors. The chain is Large ribosomal subunit protein uL10 from Salinibacter ruber (strain DSM 13855 / M31).